The sequence spans 193 residues: Recombination protein RecR (193 aa).

The C4-type zinc finger occupies Cys61–Cys76. A Toprim domain is found at Ser84–Pro170.

The protein belongs to the RecR family.

Functionally, may play a role in DNA repair. It seems to be involved in an RecBC-independent recombinational process of DNA repair. It may act with RecF and RecO. The chain is Recombination protein RecR from Helicobacter pylori (strain G27).